Here is a 310-residue protein sequence, read N- to C-terminus: Beta-ketoacyl-[acyl-carrier-protein] synthase III (310 aa).

Catalysis depends on residues Cys112 and His235. Residues Gln236–Arg240 are ACP-binding. The active site involves Asn265.

This sequence belongs to the thiolase-like superfamily. FabH family. As to quaternary structure, homodimer.

Its subcellular location is the cytoplasm. The enzyme catalyses malonyl-[ACP] + acetyl-CoA + H(+) = 3-oxobutanoyl-[ACP] + CO2 + CoA. The protein operates within lipid metabolism; fatty acid biosynthesis. Its function is as follows. Catalyzes the condensation reaction of fatty acid synthesis by the addition to an acyl acceptor of two carbons from malonyl-ACP. Catalyzes the first condensation reaction which initiates fatty acid synthesis and may therefore play a role in governing the total rate of fatty acid production. Possesses both acetoacetyl-ACP synthase and acetyl transacylase activities. Its substrate specificity determines the biosynthesis of branched-chain and/or straight-chain of fatty acids. This chain is Beta-ketoacyl-[acyl-carrier-protein] synthase III, found in Geobacillus kaustophilus (strain HTA426).